We begin with the raw amino-acid sequence, 219 residues long: UPF0073 inner membrane protein YqfA (219 aa).

Residues 1–23 lie on the Cytoplasmic side of the membrane; sequence MVQKPLIKQGYSLAEEIANSVSH. Residues 24–44 traverse the membrane as a helical segment; it reads GIGLVFGIVGLVLLLVQAVDL. Over 45–53 the chain is Periplasmic; that stretch reads NASATAITS. The helical transmembrane segment at 54–74 threads the bilayer; sequence YSLYGGSMILLFLASTLYHAI. The Cytoplasmic portion of the chain corresponds to 75-90; that stretch reads PHQRAKMWLKKFDHCA. A helical membrane pass occupies residues 91 to 111; sequence IYLLIAGTYTPFLLVGLDSPL. The Periplasmic portion of the chain corresponds to 112–113; that stretch reads AR. The chain crosses the membrane as a helical span at residues 114 to 134; that stretch reads GLMIVIWSLALLGILFKLTIA. Residues 135–138 are Cytoplasmic-facing; it reads HRFK. The helical transmembrane segment at 139–159 threads the bilayer; the sequence is ILSLVTYLAMGWLSLVVIYEM. The Periplasmic segment spans residues 160–165; sequence AVKLAA. The chain crosses the membrane as a helical span at residues 166–186; that stretch reads GSVTLLAVGGVVYSLGVIFYV. Over 187–195 the chain is Cytoplasmic; that stretch reads CKRIPYNHA. Residues 196–216 traverse the membrane as a helical segment; it reads IWHGFVLGGSVCHFLAIYLYI. Topologically, residues 217–219 are periplasmic; that stretch reads GQA.

Belongs to the UPF0073 (Hly-III) family.

It localises to the cell inner membrane. The chain is UPF0073 inner membrane protein YqfA (yqfA) from Escherichia coli O157:H7.